A 487-amino-acid polypeptide reads, in one-letter code: Cytochrome P450 2C16 (487 aa).

C432 contributes to the heme binding site.

The protein belongs to the cytochrome P450 family. Heme serves as cofactor. Expressed constitutively in liver, lung, testes, and kidney.

Its subcellular location is the endoplasmic reticulum membrane. It is found in the microsome membrane. It catalyses the reaction an organic molecule + reduced [NADPH--hemoprotein reductase] + O2 = an alcohol + oxidized [NADPH--hemoprotein reductase] + H2O + H(+). In terms of biological role, cytochromes P450 are a group of heme-thiolate monooxygenases. In liver microsomes, this enzyme is involved in an NADPH-dependent electron transport pathway. It oxidizes a variety of structurally unrelated compounds, including steroids, fatty acids, and xenobiotics. The protein is Cytochrome P450 2C16 (CYP2C16) of Oryctolagus cuniculus (Rabbit).